The primary structure comprises 357 residues: 5-hydroxytryptamine receptor 5A (357 aa).

Residues 1–36 are Extracellular-facing; it reads MDLPINLTSFSLSTPSTLEPNRSLDTEALRTSQSFL. N-linked (GlcNAc...) asparagine glycosylation is found at Asn6 and Asn21. A helical membrane pass occupies residues 37-63; it reads SAFRVLVLTLLGFLAAATFTWNLLVLA. Residues 64–76 lie on the Cytoplasmic side of the membrane; the sequence is TILRVRTFHRVPH. The helical transmembrane segment at 77 to 103 threads the bilayer; the sequence is NLVASMAISDVLVAVLVMPLSLVHELS. The Extracellular portion of the chain corresponds to 104-114; that stretch reads GRRWQLGRRLC. The cysteines at positions 114 and 192 are disulfide-linked. The helical transmembrane segment at 115–137 threads the bilayer; the sequence is QLWIACDVLCCTASIWNVTAIAL. Serotonin is bound at residue Asp121. The Cytoplasmic segment spans residues 138 to 155; that stretch reads DRYWSITRHLEYTLRARK. The chain crosses the membrane as a helical span at residues 156-176; it reads RVSNVMILLTWALSAVISLAP. The Extracellular portion of the chain corresponds to 177–198; that stretch reads LLFGWGETYSELSEECQVSREP. A helical membrane pass occupies residues 199–220; sequence SYTVFSTVGAFYLPLCVVLFVY. At 221–287 the chain is on the cytoplasmic side; that stretch reads WKIYKAAKFR…QKEQRAALMV (67 aa). Residues 288–312 form a helical membrane-spanning segment; that stretch reads GILIGVFVLCWFPFFVTELISPLCS. Residues 313-314 lie on the Extracellular side of the membrane; the sequence is WD. A helical membrane pass occupies residues 315–339; it reads IPALWKSIFLWLGYSNSFFNPLIYT. Topologically, residues 340 to 357 are cytoplasmic; the sequence is AFNRSYSSAFKVFFSKQQ.

It belongs to the G-protein coupled receptor 1 family. Central nervous system.

The protein resides in the cell membrane. G-protein coupled receptor for 5-hydroxytryptamine (serotonin), a biogenic hormone that functions as a neurotransmitter, a hormone and a mitogen. Also functions as a receptor for ergot alkaloid derivatives and other psychoactive substances. Ligand binding causes a conformation change that triggers signaling via guanine nucleotide-binding proteins (G proteins) and modulates the activity of downstream effectors. Htr5a is coupled to G(i)/G(o) G alpha proteins and mediates inhibitory neurotransmission: signaling inhibits adenylate cyclase activity and activates a phosphatidylinositol-calcium second messenger system that regulates the release of Ca(2+) ions from intracellular stores. In Rattus norvegicus (Rat), this protein is 5-hydroxytryptamine receptor 5A.